We begin with the raw amino-acid sequence, 545 residues long: ATP synthase subunit alpha (545 aa).

Residue 173–180 (GDRQTGKT) participates in ATP binding.

This sequence belongs to the ATPase alpha/beta chains family. As to quaternary structure, F-type ATPases have 2 components, CF(1) - the catalytic core - and CF(0) - the membrane proton channel. CF(1) has five subunits: alpha(3), beta(3), gamma(1), delta(1), epsilon(1). CF(0) has three main subunits: a(1), b(2) and c(9-12). The alpha and beta chains form an alternating ring which encloses part of the gamma chain. CF(1) is attached to CF(0) by a central stalk formed by the gamma and epsilon chains, while a peripheral stalk is formed by the delta and b chains.

The protein resides in the cell membrane. It carries out the reaction ATP + H2O + 4 H(+)(in) = ADP + phosphate + 5 H(+)(out). Produces ATP from ADP in the presence of a proton gradient across the membrane. The alpha chain is a regulatory subunit. The polypeptide is ATP synthase subunit alpha (Clavibacter michiganensis subsp. michiganensis (strain NCPPB 382)).